The primary structure comprises 1135 residues: Nonribosomal peptide synthetase 9 (1135 aa).

The condensation 1 stretch occupies residues Thr23–Pro77. An adenylation region spans residues Ser177–Thr562. The interval Gly485 to Ser507 is disordered. A compositionally biased stretch (low complexity) spans Gly491–Arg502. The 77-residue stretch at Ala672–Gln748 folds into the Carrier domain. Ser709 is subject to O-(pantetheine 4'-phosphoryl)serine. A condensation 2 region spans residues Asp746 to Val999.

It belongs to the NRP synthetase family.

Its function is as follows. Nonribosomal peptide synthesis (NRPS) is a key mechanism responsible for the biosynthesis of bioactive metabolites which are potentially contributing to organismal virulence. The sequence is that of Nonribosomal peptide synthetase 9 (NRPS9) from Aspergillus fumigatus (strain ATCC MYA-4609 / CBS 101355 / FGSC A1100 / Af293) (Neosartorya fumigata).